The following is a 470-amino-acid chain: Poly(A) polymerase catalytic subunit (470 aa).

Catalysis depends on residues Asp192 and Asp194.

This sequence belongs to the poxviridae poly(A) polymerase catalytic subunit family. In terms of assembly, heterodimer of a large (catalytic) subunit and a small (regulatory) subunit.

It catalyses the reaction RNA(n) + ATP = RNA(n)-3'-adenine ribonucleotide + diphosphate. Its function is as follows. Polymerase that creates the 3'-poly(A) tail of mRNA's. The chain is Poly(A) polymerase catalytic subunit (PAPL) from Odocoileus hemionus (Mule deer).